Consider the following 4981-residue polypeptide: Protocadherin Fat 4 (4981 aa).

Positions 1-38 (MDLAPDRATGRPWLPLHTLSVSQLLRVFWLLSLLPGQA) are cleaved as a signal peptide. Topologically, residues 39 to 4504 (WVHGAEPRQV…PEEISLPLWA (4466 aa)) are extracellular. Cadherin domains are found at residues 43 to 135 (AEPR…APVF), 136 to 250 (PDPS…PPVF), 251 to 353 (GSSH…DPVV), 359 to 475 (PATS…PPVF), 476 to 582 (SQQV…KPVF), 584 to 689 (QPEG…SPVF), 690 to 793 (YPVQ…PPVF), 794 to 893 (SQVA…SPHF), 894 to 996 (LQAI…SPVF), 997 to 1100 (DQLS…RPLF), 1101 to 1210 (NSTN…APKF), 1211 to 1315 (LKDF…TPSF), 1316 to 1420 (PKST…PPSF), 1421 to 1529 (PPGD…VPMF), 1529 to 1629 (FISQ…GPVF), 1630 to 1740 (TQPK…PPVF), 1741 to 1841 (PTDM…TPKF), 1842 to 1944 (SRPV…PPIF), 1945 to 2051 (SLNS…PPTF), 2051 to 2154 (FLSP…NPIF), 2155 to 2259 (AQAL…VPVF), 2260 to 2364 (ELSP…VPTF), 2365 to 2466 (ASKA…PPRF), 2467 to 2567 (QHHP…FPKV), 2568 to 2669 (RAKE…APIF), 2670 to 2773 (KEDP…APRF), 2773 to 2872 (FSQI…APRF), 2873 to 2983 (SRTS…APQF), 2984 to 3089 (LKSK…TPEF), 3090 to 3194 (SQSH…SPVF), 3195 to 3298 (LSDD…VPRF), 3299 to 3404 (VSKL…PPIF), 3405 to 3510 (TLNI…GPML), and 3509 to 3620 (MLTV…VEIF). Residues Asn84 and Asn237 are each glycosylated (N-linked (GlcNAc...) asparagine). N-linked (GlcNAc...) asparagine glycans are attached at residues Asn393, Asn416, Asn435, Asn483, Asn551, Asn615, Asn676, Asn721, Asn825, Asn880, Asn946, Asn1085, Asn1101, Asn1104, Asn1225, Asn1296, Asn1389, and Asn1514. Asn1828, Asn1899, Asn1967, and Asn2119 each carry an N-linked (GlcNAc...) asparagine glycan. N-linked (GlcNAc...) asparagine glycosylation is found at Asn2387 and Asn2430. N-linked (GlcNAc...) asparagine glycans are attached at residues Asn2921, Asn2937, Asn3036, Asn3140, Asn3217, Asn3392, and Asn3477. 2 N-linked (GlcNAc...) asparagine glycosylation sites follow: Asn3706 and Asn3758. The EGF-like 1 domain maps to 3802–3860 (DHDSCVHGPCQNGGSCLRRLAVSSVLKSRESLPVIIVANEPLQPFLCKCLPGYAGSWCE). Disulfide bonds link Cys3806-Cys3817, Cys3811-Cys3848, Cys3850-Cys3859, Cys3866-Cys3877, Cys3871-Cys3886, Cys3888-Cys3897, Cys3904-Cys3915, Cys3909-Cys3924, Cys3926-Cys3935, Cys3942-Cys3953, Cys3947-Cys3962, and Cys3964-Cys3973. The EGF-like 2; calcium-binding domain maps to 3862 to 3898 (DIDECLPSPCHSGGTCHNLVGGFSCSCPDGFTGRACE). Residues 3900–3936 (DINECLQSPCKNGAICQNFPGSFNCVCKTGYTGKMCE) enclose the EGF-like 3; calcium-binding domain. In terms of domain architecture, EGF-like 4 spans 3938 to 3974 (SVNYCECNPCFNGGSCQSGVDSYYCHCPFGVFGKHCE). Residues 3975 to 4159 (LNSYGFEELS…LAAQGILDQC (185 aa)) enclose the Laminin G-like 1 domain. Asn4017 carries N-linked (GlcNAc...) asparagine glycosylation. Intrachain disulfides connect Cys4133–Cys4159, Cys4166–Cys4177, Cys4171–Cys4186, and Cys4188–Cys4197. Residues 4162–4198 (LEGACTRSPCQHGGTCMDYWSWQQCHCKEGLTGKYCE) enclose the EGF-like 5 domain. The 182-residue stretch at 4217–4398 (YHMSQNEKRE…KTDPSVKIGC (182 aa)) folds into the Laminin G-like 2 domain. Asn4267 and Asn4312 each carry an N-linked (GlcNAc...) asparagine glycan. 4 disulfides stabilise this stretch: Cys4365-Cys4398, Cys4430-Cys4441, Cys4435-Cys4451, and Cys4453-Cys4462. The EGF-like 6 domain occupies 4426–4463 (PPGDCASHPCQNGGSCEPGLHSGFTCSCPDSHTGRTCE). The chain crosses the membrane as a helical span at residues 4505-4525 (VPAIVGSCATVLALLVLSLIL). The Cytoplasmic portion of the chain corresponds to 4526–4981 (CNQCRGKKAK…PKDGEAEQYV (456 aa)). 5 disordered regions span residues 4534 to 4584 (AKNP…PDII), 4680 to 4713 (QGLRTSSLSHSACPTPNPLSRHSPAPFSKSSTFY), 4752 to 4856 (RSKS…MEYD), 4869 to 4911 (KLSQ…AAPG), and 4957 to 4981 (AAANEEGKAGTTKPVPKDGEAEQYV). Residues 4680 to 4699 (QGLRTSSLSHSACPTPNPLS) show a composition bias toward polar residues. Residues 4706-4795 (FSKSSTFYRN…GLSIEEVERL (90 aa)) form a necessary and sufficient for interaction with MPDZ region. Positions 4809-4821 (DHGRSSSEEDCRR) are enriched in basic and acidic residues. Ser4876 is modified (phosphoserine). The span at 4971 to 4981 (VPKDGEAEQYV) shows a compositional bias: basic and acidic residues.

Heterophilic interaction with DCHS1; this interaction affects their respective protein levels. Interacts (via cytoplasmic domain) with MPDZ. Forms a complex with PALS1 and MPDZ. In terms of tissue distribution, widely expressed. Expressed in fetal brain, infant brain, brain tumor and colorectal cancer.

The protein resides in the membrane. Functionally, cadherins are calcium-dependent cell adhesion proteins. FAT4 plays a role in the maintenance of planar cell polarity as well as in inhibition of YAP1-mediated neuroprogenitor cell proliferation and differentiation. This is Protocadherin Fat 4 (FAT4) from Homo sapiens (Human).